A 385-amino-acid polypeptide reads, in one-letter code: MYSKELGINFFGNESNKKRQLNKIEILKKNIKNLKIFLIIAGTNTSQIPGISAAGINAKSRRKTALADAEFLLEGASKDHKYKLPLLNAGVTPALISHVCSKLINIYPVIVPLGIGAKPYFNHLDVEDRNLGPSNCLTTGKSMTKERVLNLYEKGLAIGKSLQQPVLISESVPGGTTTAQAVMEAFGLQVSNLVGSSLFKAPRELRRKVVKRGLFNANFKANFDSFDVVAAVGDPFQAFSMGLLIGARLAKQPVILSGGSQMLAIILLVLEFLDEKHKDEFIEDVFIATTGWLVKDNSLNDLVNLINEKYDVKLLGLASPLNFKSSKYKELRDYELGHVKEGVGAGGISLLAFLDGFKNEEIVSLCQLNLEMMKDLGQISLEKDC.

The protein belongs to the UPF0284 family.

The protein is UPF0284 protein A9601_04941 of Prochlorococcus marinus (strain AS9601).